The primary structure comprises 393 residues: Pyrimidine monooxygenase RutA (393 aa).

Residues 79–80 (IK), asparagine 145, glutamate 154, 170–171 (RY), and serine 220 contribute to the FMN site.

The protein belongs to the NtaA/SnaA/DszA monooxygenase family. RutA subfamily.

It catalyses the reaction uracil + FMNH2 + NADH + O2 = (Z)-3-ureidoacrylate + FMN + NAD(+) + H2O + H(+). The catalysed reaction is thymine + FMNH2 + NADH + O2 = (Z)-2-methylureidoacrylate + FMN + NAD(+) + H2O + H(+). Functionally, catalyzes the pyrimidine ring opening between N-3 and C-4 by an unusual flavin hydroperoxide-catalyzed mechanism, adding oxygen atoms in the process to yield ureidoacrylate peracid, that immediately reacts with FMN forming ureidoacrylate and FMN-N(5)-oxide. The FMN-N(5)-oxide reacts spontaneously with NADH to produce FMN. Requires the flavin reductase RutF to regenerate FMN in vivo. The sequence is that of Pyrimidine monooxygenase RutA from Escherichia coli O6:H1 (strain CFT073 / ATCC 700928 / UPEC).